Reading from the N-terminus, the 88-residue chain is Parvalbumin beta 3 (88 aa).

The residue at position 1 (alanine 1) is an N-acetylalanine. Residues 31-66 (KSPEEVKKFFAIIDQDHSGFIEEEELKLFLQTFSAG) enclose the EF-hand domain. The Ca(2+) site is built by aspartate 44, aspartate 46, serine 48, phenylalanine 50, glutamate 52, glutamate 55, and glutamate 81.

This sequence belongs to the parvalbumin family.

Functionally, in muscle, parvalbumin is thought to be involved in relaxation after contraction. It binds two calcium ions. The polypeptide is Parvalbumin beta 3 (Merluccius productus (North Pacific hake)).